Reading from the N-terminus, the 655-residue chain is Proprotein convertase subtilisin/kexin type 4 (655 aa).

Positions 1 to 26 are cleaved as a signal peptide; that stretch reads MRPSQTELWLGLTLTLALLAVRWASA. The propeptide occupies 27 to 110; it reads QAPIYVSSWA…QQTLRRRVKR (84 aa). Residues 123–437 form the Peptidase S8 domain; the sequence is QWYMNKEIQQ…YGLLDAGLLV (315 aa). Catalysis depends on charge relay system residues D155, H196, and S370. The 135-residue stretch at 446 to 580 folds into the P/Homo B domain; sequence TKPQKKCAIR…TLLLYGTAED (135 aa). The N-linked (GlcNAc...) asparagine glycan is linked to N472.

It belongs to the peptidase S8 family. Furin subfamily. The proPCSK4 form interacts with HSPA5; the interaction takes place at the endoplasmic reticulum. Post-translationally, N-glycosylated. Synthesized in the endoplasmic reticulum as a zymogen, is matured by autocatalytic cleavage between the prodomain and the catalytic domain. Expressed abundantly in the testis since postnatal Day 16. In testis, strongly detected in round and elongated spermatids as well as spermatocytes. Also observed in residual bodies engulfed by Sertoli cells at spermatogenic stages VIII and IX. In ovaries, expressed in macrophage-like cells of the ovarian theca, interstitium and corpora lutea.

It is found in the cytoplasmic vesicle. The protein localises to the secretory vesicle. Its subcellular location is the acrosome membrane. In terms of biological role, proprotein convertase involved in the processing of hormone and other protein precursors at sites comprised of pairs of basic amino acid residues. In males, important for ADAM2 processing as well as other acrosomal proteins with roles in fertilization and critical for normal fertilization events such as sperm capacitation, acrosome reaction and binding of sperm to zona pellucida. Also plays a role in female fertility, involved in the regulation of trophoblast migration and placental development, may be through the proteolytical processing and activation of proteins such as IGF2. May also participate in folliculogenesis in the ovaries. The polypeptide is Proprotein convertase subtilisin/kexin type 4 (Pcsk4) (Mus musculus (Mouse)).